The primary structure comprises 316 residues: Ribonuclease Z (316 aa).

Zn(2+)-binding residues include His63, His65, Asp67, His68, His143, Asp213, and His271. Residue Asp67 is the Proton acceptor of the active site.

It belongs to the RNase Z family. In terms of assembly, homodimer. Zn(2+) serves as cofactor.

The enzyme catalyses Endonucleolytic cleavage of RNA, removing extra 3' nucleotides from tRNA precursor, generating 3' termini of tRNAs. A 3'-hydroxy group is left at the tRNA terminus and a 5'-phosphoryl group is left at the trailer molecule.. Zinc phosphodiesterase, which displays some tRNA 3'-processing endonuclease activity. Probably involved in tRNA maturation, by removing a 3'-trailer from precursor tRNA. The polypeptide is Ribonuclease Z (Bacteroides thetaiotaomicron (strain ATCC 29148 / DSM 2079 / JCM 5827 / CCUG 10774 / NCTC 10582 / VPI-5482 / E50)).